We begin with the raw amino-acid sequence, 78 residues long: Translation initiation factor IF-1, chloroplastic (78 aa).

Residues 1–72 (MEKQKLIDME…TKGRITYRLR (72 aa)) enclose the S1-like domain.

Belongs to the IF-1 family. In terms of assembly, component of the 30S ribosomal translation pre-initiation complex which assembles on the 30S ribosome in the order IF-2 and IF-3, IF-1 and N-formylmethionyl-tRNA(fMet); mRNA recruitment can occur at any time during PIC assembly.

The protein resides in the plastid. The protein localises to the chloroplast. Functionally, one of the essential components for the initiation of protein synthesis. Stabilizes the binding of IF-2 and IF-3 on the 30S subunit to which N-formylmethionyl-tRNA(fMet) subsequently binds. Helps modulate mRNA selection, yielding the 30S pre-initiation complex (PIC). Upon addition of the 50S ribosomal subunit IF-1, IF-2 and IF-3 are released leaving the mature 70S translation initiation complex. The protein is Translation initiation factor IF-1, chloroplastic of Marchantia polymorpha (Common liverwort).